Here is a 291-residue protein sequence, read N- to C-terminus: Methionine aminopeptidase (291 aa).

Residue H118 participates in substrate binding. A divalent metal cation is bound by residues D135, D146, and H209. H216 provides a ligand contact to substrate. Residues E241 and E273 each coordinate a divalent metal cation.

The protein belongs to the peptidase M24A family. Methionine aminopeptidase type 1 subfamily. As to quaternary structure, monomer. Co(2+) serves as cofactor. Requires Zn(2+) as cofactor. Mn(2+) is required as a cofactor. The cofactor is Fe(2+).

The catalysed reaction is Release of N-terminal amino acids, preferentially methionine, from peptides and arylamides.. Removes the N-terminal methionine from nascent proteins. The N-terminal methionine is often cleaved when the second residue in the primary sequence is small and uncharged (Met-Ala-, Cys, Gly, Pro, Ser, Thr, or Val). Requires deformylation of the N(alpha)-formylated initiator methionine before it can be hydrolyzed. In Chlamydia muridarum (strain MoPn / Nigg), this protein is Methionine aminopeptidase.